The chain runs to 202 residues: Probable 1-Cys peroxiredoxin (202 aa).

A Thioredoxin domain is found at 1–148 (STHGKIRIHD…VVRAVDSLLT (148 aa)). The active-site Cysteine sulfenic acid (-SOH) intermediate is the cysteine 30. The Bipartite nuclear localization signal motif lies at 178–201 (KKLFPQGFETKDLPSKKGYLRFTK).

Belongs to the peroxiredoxin family. Prx6 subfamily. Embryos.

It localises to the nucleus. Its subcellular location is the cytoplasm. The enzyme catalyses a hydroperoxide + [thioredoxin]-dithiol = an alcohol + [thioredoxin]-disulfide + H2O. In terms of biological role, thiol-specific peroxidase that catalyzes the reduction of hydrogen peroxide and organic hydroperoxides to water and alcohols, respectively. Seems to contribute to the inhibition of germination during stress. This Bromus secalinus (Rye brome) protein is Probable 1-Cys peroxiredoxin.